Consider the following 379-residue polypeptide: Anhydro-N-acetylmuramic acid kinase (379 aa).

9–16 (GTSVDGID) lines the ATP pocket.

Belongs to the anhydro-N-acetylmuramic acid kinase family.

The enzyme catalyses 1,6-anhydro-N-acetyl-beta-muramate + ATP + H2O = N-acetyl-D-muramate 6-phosphate + ADP + H(+). It functions in the pathway amino-sugar metabolism; 1,6-anhydro-N-acetylmuramate degradation. Its pathway is cell wall biogenesis; peptidoglycan recycling. Catalyzes the specific phosphorylation of 1,6-anhydro-N-acetylmuramic acid (anhMurNAc) with the simultaneous cleavage of the 1,6-anhydro ring, generating MurNAc-6-P. Is required for the utilization of anhMurNAc either imported from the medium or derived from its own cell wall murein, and thus plays a role in cell wall recycling. This chain is Anhydro-N-acetylmuramic acid kinase, found in Acaryochloris marina (strain MBIC 11017).